We begin with the raw amino-acid sequence, 546 residues long: CTP synthase (546 aa).

The segment at 1–269 (MNSNTKIIFV…DAKLVELLNL (269 aa)) is amidoligase domain. Serine 16 contributes to the CTP binding site. UTP is bound at residue serine 16. Residues 17–22 (SLGKGV) and aspartate 74 each bind ATP. The Mg(2+) site is built by aspartate 74 and glutamate 143. CTP contacts are provided by residues 150–152 (DIE), 190–195 (KTKPTQ), and lysine 226. UTP is bound by residues 190 to 195 (KTKPTQ) and lysine 226. Residues 294–546 (TIAMVGKYVS…IQAAIENSNN (253 aa)) enclose the Glutamine amidotransferase type-1 domain. Residue glycine 356 participates in L-glutamine binding. Cysteine 383 functions as the Nucleophile; for glutamine hydrolysis in the catalytic mechanism. Residues 384–387 (LGMQ), glutamate 407, and arginine 474 contribute to the L-glutamine site. Catalysis depends on residues histidine 519 and glutamate 521.

The protein belongs to the CTP synthase family. Homotetramer.

The catalysed reaction is UTP + L-glutamine + ATP + H2O = CTP + L-glutamate + ADP + phosphate + 2 H(+). It catalyses the reaction L-glutamine + H2O = L-glutamate + NH4(+). It carries out the reaction UTP + NH4(+) + ATP = CTP + ADP + phosphate + 2 H(+). It functions in the pathway pyrimidine metabolism; CTP biosynthesis via de novo pathway; CTP from UDP: step 2/2. Allosterically activated by GTP, when glutamine is the substrate; GTP has no effect on the reaction when ammonia is the substrate. The allosteric effector GTP functions by stabilizing the protein conformation that binds the tetrahedral intermediate(s) formed during glutamine hydrolysis. Inhibited by the product CTP, via allosteric rather than competitive inhibition. Functionally, catalyzes the ATP-dependent amination of UTP to CTP with either L-glutamine or ammonia as the source of nitrogen. Regulates intracellular CTP levels through interactions with the four ribonucleotide triphosphates. This is CTP synthase from Francisella tularensis subsp. mediasiatica (strain FSC147).